A 183-amino-acid chain; its full sequence is Inner membrane-spanning protein YciB (183 aa).

5 helical membrane-spanning segments follow: residues 22-44 (IYTA…WVRY), 54-74 (TFLL…DAFI), 76-96 (WKVT…RYGF), 119-139 (VNLA…YVAF), and 149-169 (FKVF…GVYL).

This sequence belongs to the YciB family.

The protein resides in the cell inner membrane. In terms of biological role, plays a role in cell envelope biogenesis, maintenance of cell envelope integrity and membrane homeostasis. This Aeromonas salmonicida (strain A449) protein is Inner membrane-spanning protein YciB.